The sequence spans 498 residues: ATP synthase subunit beta, chloroplastic (498 aa).

172–179 (GGAGVGKT) contacts ATP.

This sequence belongs to the ATPase alpha/beta chains family. F-type ATPases have 2 components, CF(1) - the catalytic core - and CF(0) - the membrane proton channel. CF(1) has five subunits: alpha(3), beta(3), gamma(1), delta(1), epsilon(1). CF(0) has four main subunits: a(1), b(1), b'(1) and c(9-12).

Its subcellular location is the plastid. The protein resides in the chloroplast thylakoid membrane. It carries out the reaction ATP + H2O + 4 H(+)(in) = ADP + phosphate + 5 H(+)(out). In terms of biological role, produces ATP from ADP in the presence of a proton gradient across the membrane. The catalytic sites are hosted primarily by the beta subunits. The sequence is that of ATP synthase subunit beta, chloroplastic from Chamaerops humilis (Mediterranean fan palm).